Consider the following 461-residue polypeptide: Protein IQ-DOMAIN 2 (461 aa).

The segment at 1–55 (MGKKAKWFSSVKKAFSPDSKKSKQKLAEGQNGVISNPPVVDNVRQSSSSPPPALA) is disordered. In terms of domain architecture, IQ spans 114-142 (EEAAAILIQTIFRGYLARRALRAMRGLVR). The interval 141-158 (VRLKLLMEGSVVKRQAAN) is calmodulin-binding. The segment at 278 to 461 (PLESSEKEQS…GVTVTNGAGS (184 aa)) is disordered. The segment covering 310–345 (LTRNGSTQPNTPSSARGTPRNKNSFFSPPTPSRLNQ) has biased composition (polar residues). A Nuclear localization signal motif is present at residues 425–432 (KKRLSYPT).

The protein belongs to the IQD family. Binds to multiple calmodulin (CaM) in the presence of Ca(2+) and CaM-like proteins.

The protein localises to the nucleus. Its subcellular location is the cytoplasm. It is found in the cytoskeleton. Functionally, may be involved in cooperative interactions with calmodulins or calmodulin-like proteins. Recruits calmodulin proteins to microtubules, thus being a potential scaffold in cellular signaling and trafficking. May associate with nucleic acids and regulate gene expression at the transcriptional or post-transcriptional level. The protein is Protein IQ-DOMAIN 2 of Arabidopsis thaliana (Mouse-ear cress).